The sequence spans 448 residues: Tubulin beta chain (448 aa).

GTP-binding residues include Gln-11, Glu-69, Ser-138, Gly-142, Thr-143, Gly-144, Asn-204, and Asn-226. Glu-69 is a binding site for Mg(2+). The interval 429–448 (SISDGEEQPYAEEAAYEAEE) is disordered. The span at 432–448 (DGEEQPYAEEAAYEAEE) shows a compositional bias: acidic residues.

It belongs to the tubulin family. In terms of assembly, dimer of alpha and beta chains. A typical microtubule is a hollow water-filled tube with an outer diameter of 25 nm and an inner diameter of 15 nM. Alpha-beta heterodimers associate head-to-tail to form protofilaments running lengthwise along the microtubule wall with the beta-tubulin subunit facing the microtubule plus end conferring a structural polarity. Microtubules usually have 13 protofilaments but different protofilament numbers can be found in some organisms and specialized cells. Requires Mg(2+) as cofactor.

The protein localises to the cytoplasm. Its subcellular location is the cytoskeleton. Functionally, tubulin is the major constituent of microtubules, a cylinder consisting of laterally associated linear protofilaments composed of alpha- and beta-tubulin heterodimers. Microtubules grow by the addition of GTP-tubulin dimers to the microtubule end, where a stabilizing cap forms. Below the cap, tubulin dimers are in GDP-bound state, owing to GTPase activity of alpha-tubulin. The polypeptide is Tubulin beta chain (Aspergillus fumigatus (strain ATCC MYA-4609 / CBS 101355 / FGSC A1100 / Af293) (Neosartorya fumigata)).